A 484-amino-acid polypeptide reads, in one-letter code: Sperm motility kinase 1 (484 aa).

The Protein kinase domain maps to 8–256 (YEMLETIGQG…VAEVMVHPWI (249 aa)). ATP-binding positions include 14 to 22 (IGQGGCAKV) and K37. D127 (proton acceptor) is an active-site residue. In terms of domain architecture, UBA spans 274 to 314 (KPDPAIVKPMGHIGFQAQDIEDSLRQRKFNETMASYCLLKK). Residues 423–434 (IDESTEGHTSAS) are compositionally biased toward polar residues. Residues 423–447 (IDESTEGHTSASAEDKPVHSRGWPR) are disordered.

This sequence belongs to the protein kinase superfamily. Tyr protein kinase family. Smok subfamily. Testis-specific. Expressed in the testis from 22 days postpartum (22 dpp).

The enzyme catalyses L-seryl-[protein] + ATP = O-phospho-L-seryl-[protein] + ADP + H(+). It carries out the reaction L-threonyl-[protein] + ATP = O-phospho-L-threonyl-[protein] + ADP + H(+). May play a role in sperm motility, especially in the regulation of flagellar function. In Mus musculus (Mouse), this protein is Sperm motility kinase 1 (Smok1).